The primary structure comprises 177 residues: Large ribosomal subunit protein uL6 (177 aa).

A compositionally biased stretch (basic and acidic residues) spans 156–171 (PYKGKGVRYDTETIRR). Residues 156 to 177 (PYKGKGVRYDTETIRRKEGKKK) are disordered.

It belongs to the universal ribosomal protein uL6 family. As to quaternary structure, part of the 50S ribosomal subunit.

This protein binds to the 23S rRNA, and is important in its secondary structure. It is located near the subunit interface in the base of the L7/L12 stalk, and near the tRNA binding site of the peptidyltransferase center. The polypeptide is Large ribosomal subunit protein uL6 (Gluconacetobacter diazotrophicus (strain ATCC 49037 / DSM 5601 / CCUG 37298 / CIP 103539 / LMG 7603 / PAl5)).